Here is a 182-residue protein sequence, read N- to C-terminus: Mitochondrial FAD-linked sulfhydryl oxidase erv1 (182 aa).

One can recognise an ERV/ALR sulfhydryl oxidase domain in the interval 75–177 (RLPDVAELGR…FNCQVWSKKA (103 aa)). FAD is bound by residues 81 to 87 (ELGRSTW), histidine 91, and tyrosine 120. Cystine bridges form between cysteine 122–cysteine 125 and cysteine 153–cysteine 170. Residues 153–165 (CEAH…RLGK) and 176–177 (KA) contribute to the FAD site.

FAD serves as cofactor.

It is found in the mitochondrion intermembrane space. The enzyme catalyses 2 R'C(R)SH + O2 = R'C(R)S-S(R)CR' + H2O2. In terms of biological role, FAD-dependent sulfhydryl oxidase that catalyzes disulfide bond formation. Required for the import and folding of small cysteine-containing proteins in the mitochondrial intermembrane space (IMS). The chain is Mitochondrial FAD-linked sulfhydryl oxidase erv1 (erv1) from Schizosaccharomyces pombe (strain 972 / ATCC 24843) (Fission yeast).